A 327-amino-acid polypeptide reads, in one-letter code: Malate dehydrogenase (327 aa).

Residue 12–18 participates in NAD(+) binding; it reads GAAGQIA. 2 residues coordinate substrate: R93 and R99. NAD(+) contacts are provided by residues N106, Q113, and 130-132; that span reads VGN. N132 and R163 together coordinate substrate. H188 (proton acceptor) is an active-site residue.

It belongs to the LDH/MDH superfamily. MDH type 2 family.

The catalysed reaction is (S)-malate + NAD(+) = oxaloacetate + NADH + H(+). Its function is as follows. Catalyzes the reversible oxidation of malate to oxaloacetate. In Burkholderia mallei (strain NCTC 10247), this protein is Malate dehydrogenase.